Consider the following 290-residue polypeptide: 4-diphosphocytidyl-2-C-methyl-D-erythritol kinase (290 aa).

Residue Lys-10 is part of the active site. 95 to 105 is an ATP binding site; that stretch reads PVAAGLAGGSS. The active site involves Asp-137.

The protein belongs to the GHMP kinase family. IspE subfamily.

The catalysed reaction is 4-CDP-2-C-methyl-D-erythritol + ATP = 4-CDP-2-C-methyl-D-erythritol 2-phosphate + ADP + H(+). It functions in the pathway isoprenoid biosynthesis; isopentenyl diphosphate biosynthesis via DXP pathway; isopentenyl diphosphate from 1-deoxy-D-xylulose 5-phosphate: step 3/6. Its function is as follows. Catalyzes the phosphorylation of the position 2 hydroxy group of 4-diphosphocytidyl-2C-methyl-D-erythritol. In Geobacillus kaustophilus (strain HTA426), this protein is 4-diphosphocytidyl-2-C-methyl-D-erythritol kinase.